A 258-amino-acid polypeptide reads, in one-letter code: Indole-3-glycerol phosphate synthase 2 (258 aa).

This sequence belongs to the TrpC family.

It carries out the reaction 1-(2-carboxyphenylamino)-1-deoxy-D-ribulose 5-phosphate + H(+) = (1S,2R)-1-C-(indol-3-yl)glycerol 3-phosphate + CO2 + H2O. It functions in the pathway amino-acid biosynthesis; L-tryptophan biosynthesis; L-tryptophan from chorismate: step 4/5. In terms of biological role, the function of the second trp operon in S.coelicolor is to produce tryptophan for the biosynthesis of calcium-dependent antibiotic (CDA). In Streptomyces coelicolor (strain ATCC BAA-471 / A3(2) / M145), this protein is Indole-3-glycerol phosphate synthase 2 (trpC2).